A 428-amino-acid chain; its full sequence is Arabinosyltransferase RRA2 (428 aa).

Topologically, residues 1 to 15 (MAGRRDRIQQLRGSR) are cytoplasmic. Residues 16 to 36 (IAIAIFVGILIGCVCSVLFPN) form a helical; Signal-anchor for type II membrane protein membrane-spanning segment. Residues 37 to 428 (GFFNSGSSLI…ALDSFPDGSD (392 aa)) are Lumenal-facing. Positions 250–252 (DVD) match the DXD motif motif. An N-linked (GlcNAc...) asparagine glycan is attached at Asn278.

This sequence belongs to the glycosyltransferase 77 family. As to expression, expressed in roots, rosette and cauline leaves, stems, flowers and siliques.

The protein resides in the golgi apparatus membrane. Plays a role in the arabinosylation of cell wall components. Involved in the arabinosylation of extensin proteins in root hair cells. Extensins are structural glycoproteins present in cell walls and its arabinosylation is important for root hair cell development. This is Arabinosyltransferase RRA2 from Arabidopsis thaliana (Mouse-ear cress).